The primary structure comprises 491 residues: Aspartyl/glutamyl-tRNA(Asn/Gln) amidotransferase subunit B (491 aa).

This sequence belongs to the GatB/GatE family. GatB subfamily. Heterotrimer of A, B and C subunits.

It catalyses the reaction L-glutamyl-tRNA(Gln) + L-glutamine + ATP + H2O = L-glutaminyl-tRNA(Gln) + L-glutamate + ADP + phosphate + H(+). The catalysed reaction is L-aspartyl-tRNA(Asn) + L-glutamine + ATP + H2O = L-asparaginyl-tRNA(Asn) + L-glutamate + ADP + phosphate + 2 H(+). Functionally, allows the formation of correctly charged Asn-tRNA(Asn) or Gln-tRNA(Gln) through the transamidation of misacylated Asp-tRNA(Asn) or Glu-tRNA(Gln) in organisms which lack either or both of asparaginyl-tRNA or glutaminyl-tRNA synthetases. The reaction takes place in the presence of glutamine and ATP through an activated phospho-Asp-tRNA(Asn) or phospho-Glu-tRNA(Gln). The protein is Aspartyl/glutamyl-tRNA(Asn/Gln) amidotransferase subunit B of Parasynechococcus marenigrum (strain WH8102).